Consider the following 199-residue polypeptide: Probable chemoreceptor glutamine deamidase CheD (199 aa).

The protein belongs to the CheD family.

The catalysed reaction is L-glutaminyl-[protein] + H2O = L-glutamyl-[protein] + NH4(+). Probably deamidates glutamine residues to glutamate on methyl-accepting chemotaxis receptors (MCPs), playing an important role in chemotaxis. This is Probable chemoreceptor glutamine deamidase CheD from Cereibacter sphaeroides (strain ATCC 17025 / ATH 2.4.3) (Rhodobacter sphaeroides).